Consider the following 157-residue polypeptide: uncharacterized protein (157 aa).

This is an uncharacterized protein from Acidianus hospitalis (AFV-1).